A 321-amino-acid polypeptide reads, in one-letter code: Glucokinase (321 aa).

8-13 is a binding site for ATP; that stretch reads GDVGGT.

The protein belongs to the bacterial glucokinase family.

Its subcellular location is the cytoplasm. The enzyme catalyses D-glucose + ATP = D-glucose 6-phosphate + ADP + H(+). Not highly important in E.coli as glucose is transported into the cell by the PTS system already as glucose 6-phosphate. The protein is Glucokinase of Escherichia coli O139:H28 (strain E24377A / ETEC).